Here is a 499-residue protein sequence, read N- to C-terminus: MIKRALISVFDKTGILDLAKFLESRDVEIISTGGTYKHLKENGVKVIDIEEVTGFPEMLDGRVKTLNPLIHGGILAIRDNEEHMKVIEEKGIKPIDMVVVNLYPFFNKVEEDLSFDEKVEFIDIGGPTMIRAAAKNFKDVVVLTDTKDYENVINEIKENNQVNIKTRKKLAGKVFNLMSAYDAAISNFLLEEEYPEYLTLSYKKNMDLRYGENPHQAAAYYTSTVGKYPMKNFEKLNGKELSYNNIKDMDIAWKTVCEFKEVACCALKHNTPCGVAIGDTIQEVYTKAYECDPISIFGGIVAFNRKVDKETAENLIKIFLEIVVAPDFDEDALEVLKTKKNLRVIKCEEKSTQDKDMTKVDGGILVQQSDNKLLEDTKVVTEKSPTEKEMNDLIFGMKVVKYVKSNAIVVIKDGMAKGIGGGQVNRIWAAKEALDRAGDGVVLASDAFFPFGDVAEESAKWGIKAIIQPGGSIRDEESIKVCNEKGISMVFTGVRHFKH.

The MGS-like domain occupies 1–144 (MIKRALISVF…KNFKDVVVLT (144 aa)).

The protein belongs to the PurH family.

It catalyses the reaction (6R)-10-formyltetrahydrofolate + 5-amino-1-(5-phospho-beta-D-ribosyl)imidazole-4-carboxamide = 5-formamido-1-(5-phospho-D-ribosyl)imidazole-4-carboxamide + (6S)-5,6,7,8-tetrahydrofolate. The catalysed reaction is IMP + H2O = 5-formamido-1-(5-phospho-D-ribosyl)imidazole-4-carboxamide. Its pathway is purine metabolism; IMP biosynthesis via de novo pathway; 5-formamido-1-(5-phospho-D-ribosyl)imidazole-4-carboxamide from 5-amino-1-(5-phospho-D-ribosyl)imidazole-4-carboxamide (10-formyl THF route): step 1/1. It participates in purine metabolism; IMP biosynthesis via de novo pathway; IMP from 5-formamido-1-(5-phospho-D-ribosyl)imidazole-4-carboxamide: step 1/1. The sequence is that of Bifunctional purine biosynthesis protein PurH from Clostridium botulinum (strain Loch Maree / Type A3).